The chain runs to 336 residues: Pyridoxal 5'-phosphate synthase subunit PdxS (336 aa).

Residue D30 participates in D-ribose 5-phosphate binding. K87 (schiff-base intermediate with D-ribose 5-phosphate) is an active-site residue. G159 serves as a coordination point for D-ribose 5-phosphate. R171 serves as a coordination point for D-glyceraldehyde 3-phosphate. Residues G257 and G278 to S279 each bind D-ribose 5-phosphate.

The protein belongs to the PdxS/SNZ family. As to quaternary structure, in the presence of PdxT, forms a dodecamer of heterodimers.

The enzyme catalyses aldehydo-D-ribose 5-phosphate + D-glyceraldehyde 3-phosphate + L-glutamine = pyridoxal 5'-phosphate + L-glutamate + phosphate + 3 H2O + H(+). It participates in cofactor biosynthesis; pyridoxal 5'-phosphate biosynthesis. Functionally, catalyzes the formation of pyridoxal 5'-phosphate from ribose 5-phosphate (RBP), glyceraldehyde 3-phosphate (G3P) and ammonia. The ammonia is provided by the PdxT subunit. Can also use ribulose 5-phosphate and dihydroxyacetone phosphate as substrates, resulting from enzyme-catalyzed isomerization of RBP and G3P, respectively. In Thermoplasma volcanium (strain ATCC 51530 / DSM 4299 / JCM 9571 / NBRC 15438 / GSS1), this protein is Pyridoxal 5'-phosphate synthase subunit PdxS.